Reading from the N-terminus, the 122-residue chain is Large ribosomal subunit protein uL18 (122 aa).

This sequence belongs to the universal ribosomal protein uL18 family. As to quaternary structure, part of the 50S ribosomal subunit; part of the 5S rRNA/L5/L18/L25 subcomplex. Contacts the 5S and 23S rRNAs.

Its function is as follows. This is one of the proteins that bind and probably mediate the attachment of the 5S RNA into the large ribosomal subunit, where it forms part of the central protuberance. The chain is Large ribosomal subunit protein uL18 from Thermotoga neapolitana (strain ATCC 49049 / DSM 4359 / NBRC 107923 / NS-E).